Here is a 154-residue protein sequence, read N- to C-terminus: Urease accessory protein UreE (154 aa).

The protein belongs to the UreE family.

It localises to the cytoplasm. Its function is as follows. Involved in urease metallocenter assembly. Binds nickel. Probably functions as a nickel donor during metallocenter assembly. This Rhizobium meliloti (strain 1021) (Ensifer meliloti) protein is Urease accessory protein UreE.